Here is a 249-residue protein sequence, read N- to C-terminus: Homeobox protein TGIF2LX (249 aa).

Basic and acidic residues predominate over residues 1–27; sequence MEAAADRPAETRSRVEKDSRRAKKDSP. Disordered stretches follow at residues 1–60 and 121–215; these read MEAA…KKKR and QRRG…EPVS. Over residues 28–46 the composition is skewed to polar residues; it reads AKTQSPAQDTSIMLRSNAD. A DNA-binding region (homeobox; TALE-type) is located at residues 55 to 118; sequence EHKKKRKGYL…INARRRILPD (64 aa). The span at 159 to 172 shows a compositional bias: polar residues; that stretch reads DNVQSLPLRSSPKG. Low complexity predominate over residues 202 to 215; it reads VSNITSSSSPEPVS.

It belongs to the TALE/TGIF homeobox family.

The protein localises to the nucleus. May have a transcription role in testis. The sequence is that of Homeobox protein TGIF2LX (TGIF2LX) from Miopithecus talapoin (Angolan talapoin).